A 525-amino-acid polypeptide reads, in one-letter code: Peptide chain release factor 3 (525 aa).

Residues alanine 8–glutamine 276 enclose the tr-type G domain. Residues serine 17–threonine 24, aspartate 85–histidine 89, and asparagine 139–aspartate 142 each bind GTP.

This sequence belongs to the TRAFAC class translation factor GTPase superfamily. Classic translation factor GTPase family. PrfC subfamily.

Its subcellular location is the cytoplasm. Its function is as follows. Increases the formation of ribosomal termination complexes and stimulates activities of RF-1 and RF-2. It binds guanine nucleotides and has strong preference for UGA stop codons. It may interact directly with the ribosome. The stimulation of RF-1 and RF-2 is significantly reduced by GTP and GDP, but not by GMP. This Coxiella burnetii (strain RSA 331 / Henzerling II) protein is Peptide chain release factor 3.